The following is a 561-amino-acid chain: MNINVADLLNGNYILLLFVVLALGLCLGKLRLGSVQLGNSIGVLVVSLLLGQQHFSINTDALNLGFMLFIFCVGVEAGPNFFSIFFRDGKNYLMLALVMVGSALIIALGLGKLFGWDIGLTAGMLAGSMTSTPVLVGAGDTLRHSGMEGSQLSVALDHLSLGYALTYLIGLVSLIVAARYLPKLQHQDLQTSAQQIARERGLDTDTKRKVYLPVIRAYRVGPELVAWADGKNLRELGIYRQTGCYIERIRRNGILANPDGDAVLQMGDDIALVGYPDAHARLDPSFRNGKEVFDRDLLDMRIVTEEIVVKNHNAVGRRLAQLKLTDHGCFLNRVIRSQIEMPIDDNVVLNKGDVLQVSGDARRVKTVADRIGFISIHSQVTDLLAFCAFFIVGLMIGMITFQFSNFSFGVGNAAGLLFAGIMLGFLRANHPTFGYIPQGALNMVKEFGLMVFMAGVGLSAGSGIGHSLGAVGWQMLVAGLIVSLLPVVICFLFGAYVLRMNRAMLFGAMMGARTCAPAMEIISDTARSNIPALGYAGTYAIANVLLTLAGTLIIIIWPGLG.

Transmembrane regions (helical) follow at residues 8 to 28 (LLNGNYILLLFVVLALGLCLG), 32 to 52 (LGSVQLGNSIGVLVVSLLLGQ), 66 to 86 (FMLFIFCVGVEAGPNFFSIFF), 94 to 114 (MLALVMVGSALIIALGLGKLF), and 158 to 178 (HLSLGYALTYLIGLVSLIVAA). RCK C-terminal domains lie at 202–288 (LDTD…SFRN) and 292–373 (VFDR…RIGF). The next 5 membrane-spanning stretches (helical) occupy residues 383 to 403 (LLAFCAFFIVGLMIGMITFQF), 406 to 426 (FSFGVGNAAGLLFAGIMLGFL), 447 to 467 (FGLMVFMAGVGLSAGSGIGHS), 475 to 495 (MLVAGLIVSLLPVVICFLFGA), and 540 to 560 (AIANVLLTLAGTLIIIIWPGL).

This sequence belongs to the AAE transporter (TC 2.A.81) family. YbjL subfamily.

Its subcellular location is the cell membrane. In Enterobacter sp. (strain 638), this protein is Putative transport protein Ent638_1362.